The following is an 87-amino-acid chain: UPF0473 protein PTH_1066 (87 aa).

The protein belongs to the UPF0473 family.

The chain is UPF0473 protein PTH_1066 from Pelotomaculum thermopropionicum (strain DSM 13744 / JCM 10971 / SI).